A 264-amino-acid chain; its full sequence is MRAIKQIVHFGWEQALSCLFPAVIFASLAITQIIPLPFLPRYDWLLIICVLMQLWMVRSGLETRDELKVITLFHLIGLALELFKVHMGSWSYPEEGYSKIFGVPLYSGFMYASVASYLCQAWRRLKVELVKWPSFFAVVPLAAAIYLNFFTHHFSIDIRWWLSGLVIIVFWQTWVTYEVNGARYRMPLALSFILIGFFIWIAENIATFFGAWKYPNQIDTWSLVHLGKVSSWLLLVIVSFLIVASLKQVKEQSPTKAEMDESFS.

Helical transmembrane passes span 19–39 (LFPAVIFASLAITQIIPLPFL), 42–62 (YDWLLIICVLMQLWMVRSGLE), 69–89 (VITLFHLIGLALELFKVHMGS), 100–120 (IFGVPLYSGFMYASVASYLCQ), 136–156 (FAVVPLAAAIYLNFFTHHFSI), 160–180 (WWLSGLVIIVFWQTWVTYEVN), 192–212 (FILIGFFIWIAENIATFFGAW), and 223–243 (LVHLGKVSSWLLLVIVSFLIV).

It is found in the cell membrane. This is an uncharacterized protein from Bacillus subtilis (strain 168).